Here is a 468-residue protein sequence, read N- to C-terminus: Putative chitinase 1 (468 aa).

A signal peptide spans 1 to 21; sequence MDFYSSLLPFLILIYLEFCSG. Positions 22-381 constitute a GH18 domain; the sequence is FNRVCYYNGW…MSIIHGLGEY (360 aa). A disulfide bridge connects residues cysteine 26 and cysteine 51. Chitin is bound by residues 73–74 and 100–103; these read VF and GGWD. Catalysis depends on glutamate 143, which acts as the Proton donor. Chitin-binding positions include tyrosine 144, 213 to 216, and tryptophan 353; that span reads KMYD. Positions 386-440 form a coiled coil; it reads SDTLEAEREMINKKIRKAAREISYYSDKGNSTMAKKMEDKLNQLKDHLSAVQAHQ.

This sequence belongs to the glycosyl hydrolase 18 family. Prismatic layer of shell (at protein level). Expressed primarily in the mantle with highest level in the outer epithelium of the mantle edge and lower level in the mantle pallium.

Its subcellular location is the secreted. It carries out the reaction Random endo-hydrolysis of N-acetyl-beta-D-glucosaminide (1-&gt;4)-beta-linkages in chitin and chitodextrins.. This Margaritifera margaritifera (Freshwater pearl mussel) protein is Putative chitinase 1.